The chain runs to 134 residues: Bet1-like protein At1g29060 (134 aa).

Residues 1–12 (MASNRGAGGSLY) are compositionally biased toward gly residues. A disordered region spans residues 1–31 (MASNRGAGGSLYGGADPYRSREGLSTRNASG). Over 1-110 (MASNRGAGGS…LSIIRSGNNH (110 aa)) the chain is Cytoplasmic. In terms of domain architecture, t-SNARE coiled-coil homology spans 40–102 (DPMHSDLDDE…KNNIRKLNLS (63 aa)). Residues 111-131 (IMHVVLFALLLFFILYMWSKM) traverse the membrane as a helical; Anchor for type IV membrane protein segment. Over 132–134 (FKR) the chain is Vesicular.

It belongs to the BET1 family.

Its subcellular location is the golgi apparatus membrane. It localises to the endoplasmic reticulum membrane. Its function is as follows. Required for vesicular transport from the ER to the Golgi complex. Functions as a SNARE associated with ER-derived vesicles. The polypeptide is Bet1-like protein At1g29060 (Arabidopsis thaliana (Mouse-ear cress)).